Here is a 387-residue protein sequence, read N- to C-terminus: Protein TsgA homolog (387 aa).

A run of 12 helical transmembrane segments spans residues 11-31, 47-67, 76-96, 101-121, 134-154, 160-180, 205-225, 243-263, 271-291, 299-319, 331-351, and 358-378; these read WISF…GMIM, NIFT…SWLI, LIFG…STSI, INIF…TFII, LLLT…ISAY, ILWY…FILT, IILL…FISW, VLVS…SFII, MFIF…YSKS, IISL…LASL, LILF…SPIV, and TTLI…CIIF.

Belongs to the major facilitator superfamily. TsgA family.

It is found in the cell membrane. The protein is Protein TsgA homolog of Buchnera aphidicola subsp. Schizaphis graminum (strain Sg).